The following is a 194-amino-acid chain: Leucyl/phenylalanyl-tRNA--protein transferase (194 aa).

This sequence belongs to the L/F-transferase family.

The protein localises to the cytoplasm. The catalysed reaction is N-terminal L-lysyl-[protein] + L-leucyl-tRNA(Leu) = N-terminal L-leucyl-L-lysyl-[protein] + tRNA(Leu) + H(+). It catalyses the reaction N-terminal L-arginyl-[protein] + L-leucyl-tRNA(Leu) = N-terminal L-leucyl-L-arginyl-[protein] + tRNA(Leu) + H(+). It carries out the reaction L-phenylalanyl-tRNA(Phe) + an N-terminal L-alpha-aminoacyl-[protein] = an N-terminal L-phenylalanyl-L-alpha-aminoacyl-[protein] + tRNA(Phe). Functionally, functions in the N-end rule pathway of protein degradation where it conjugates Leu, Phe and, less efficiently, Met from aminoacyl-tRNAs to the N-termini of proteins containing an N-terminal arginine or lysine. In Chlorobium luteolum (strain DSM 273 / BCRC 81028 / 2530) (Pelodictyon luteolum), this protein is Leucyl/phenylalanyl-tRNA--protein transferase.